The chain runs to 92 residues: Small ribosomal subunit protein uS19 (92 aa).

The protein belongs to the universal ribosomal protein uS19 family.

Functionally, protein S19 forms a complex with S13 that binds strongly to the 16S ribosomal RNA. The protein is Small ribosomal subunit protein uS19 (rpsS) of Halalkalibacterium halodurans (strain ATCC BAA-125 / DSM 18197 / FERM 7344 / JCM 9153 / C-125) (Bacillus halodurans).